We begin with the raw amino-acid sequence, 759 residues long: RNA-binding protein 28 (759 aa).

A2 carries the N-acetylalanine modification. One can recognise an RRM 1 domain in the interval 4–80; that stretch reads LTLFVGRLPP…CKINVTVAKK (77 aa). The tract at residues 84–105 is disordered; it reads NKTKEKGKNENSECPKKEPKAK. Residues 85 to 101 show a composition bias toward basic and acidic residues; it reads KTKEKGKNENSECPKKE. An RRM 2 domain is found at 114–191; that stretch reads ARLIIRNLSF…RTVAVDWAVA (78 aa). Phosphoserine is present on S122. Positions 201-330 are disordered; the sequence is VSAIGEEKSH…NKKKRKLPSD (130 aa). The segment covering 205–224 has biased composition (basic and acidic residues); it reads GEEKSHESKHQESVKKKGRE. Composition is skewed to acidic residues over residues 225 to 256 and 284 to 313; these read EEDM…EEEN and SEED…EEQE. RRM domains lie at 335–419 and 487–597; these read KTVF…LAVT and TRLC…RSLQ. Residue S397 is modified to Phosphoserine. The interval 594–759 is disordered; sequence RSLQKMRSKP…LAKRSKWFDS (166 aa). The span at 615–640 shows a compositional bias: basic and acidic residues; sequence PAKDQQQKAAQHHTEEQSKVPPEQKR. K653 participates in a covalent cross-link: Glycyl lysine isopeptide (Lys-Gly) (interchain with G-Cter in SUMO2). Over residues 689–698 the composition is skewed to basic residues; it reads VKPVHPKKPK. Residues 700 to 715 are compositionally biased toward polar residues; sequence QINQWKQEKQQLSSEQ.

Interacts with U1, U2, U4, U5, and U6 spliceosomal small nuclear RNAs (snRNAs). Ubiquitously expressed.

The protein resides in the nucleus. It localises to the nucleolus. Its function is as follows. Nucleolar component of the spliceosomal ribonucleoprotein complexes. This chain is RNA-binding protein 28 (RBM28), found in Homo sapiens (Human).